We begin with the raw amino-acid sequence, 324 residues long: MEARNQTAISKFLLLGLIEDPELQPVLFSLFLSMYLVTILGNLLILLAVISDSHLHTPMYFFLSNLSFLDICLSTTTIPKMLVNIQAQNRSITYSGCLTQICFVLFFAGLENCLLAAMAYDRYVAICHPLRYTVIMNPRLCGLLILLSLLTSVVNALLLSLMVLRLSFCTDLEIPLFFCELAQVIQLTCSDTLINNILIYFAACIFGGVPLSGIILSYTQITSCVLRMPSASGKHKAVSTCGSHLSIVLLFYGAGLGVYISSVVTDSPRKTAVASVMYSVFPQMVNPFIYSLRNKDMKGTLRKFIGRIPSLLWCAICFGFRFLE.

Over 1–25 (MEARNQTAISKFLLLGLIEDPELQP) the chain is Extracellular. Asn-5 carries an N-linked (GlcNAc...) asparagine glycan. A helical transmembrane segment spans residues 26–46 (VLFSLFLSMYLVTILGNLLIL). Topologically, residues 47–54 (LAVISDSH) are cytoplasmic. Residues 55 to 75 (LHTPMYFFLSNLSFLDICLST) traverse the membrane as a helical segment. Residues 76–99 (TTIPKMLVNIQAQNRSITYSGCLT) are Extracellular-facing. Asn-89 is a glycosylation site (N-linked (GlcNAc...) asparagine). A disulfide bridge links Cys-97 with Cys-189. The chain crosses the membrane as a helical span at residues 100-120 (QICFVLFFAGLENCLLAAMAY). At 121–139 (DRYVAICHPLRYTVIMNPR) the chain is on the cytoplasmic side. The helical transmembrane segment at 140 to 160 (LCGLLILLSLLTSVVNALLLS) threads the bilayer. The Extracellular segment spans residues 161–197 (LMVLRLSFCTDLEIPLFFCELAQVIQLTCSDTLINNI). Residues 198 to 217 (LIYFAACIFGGVPLSGIILS) form a helical membrane-spanning segment. Residues 218–237 (YTQITSCVLRMPSASGKHKA) lie on the Cytoplasmic side of the membrane. A helical membrane pass occupies residues 238–258 (VSTCGSHLSIVLLFYGAGLGV). The Extracellular portion of the chain corresponds to 259–271 (YISSVVTDSPRKT). A helical membrane pass occupies residues 272-292 (AVASVMYSVFPQMVNPFIYSL). Residues 293-324 (RNKDMKGTLRKFIGRIPSLLWCAICFGFRFLE) lie on the Cytoplasmic side of the membrane.

It belongs to the G-protein coupled receptor 1 family.

It is found in the cell membrane. In terms of biological role, odorant receptor. The protein is Olfactory receptor 7G2 (OR7G2) of Homo sapiens (Human).